The following is a 736-amino-acid chain: Oligopeptide transporter 6 (736 aa).

The next 15 helical transmembrane spans lie at 43-63, 66-86, 116-136, 148-168, 210-230, 258-278, 288-308, 357-377, 412-432, 443-463, 489-511, 527-547, 602-622, 645-665, and 678-698; these read MWVL…FFWY, MPLS…GHLM, VLIT…HILS, FLPA…WAGL, FFLI…YLFT, LGIG…GSPL, VAIG…WLNI, FFAV…VHVL, VPLW…MFIS, WWGV…IGVI, PVAN…TFIS, FMAQ…TAWW, WFFL…KMFP, ATAV…HFIF, and VLSG…FLAL.

The protein belongs to the oligopeptide OPT transporter (TC 2.A.67.1) family. As to expression, expressed in flowers and roots, and at a low level in leaves and stems. Detected in the cambial zone of the vascular bundles and in the region of lateral root initiation. Low expression in the vascular network of the petals and high in the stamen filaments and the gynoecium.

The protein resides in the membrane. Functionally, involved in the translocation of tetra- and pentapeptides across the cellular membrane in an energy-dependent manner. Also involved in transport of glutathione derivatives and metal complexes, and may be involved in stress resistance. The chain is Oligopeptide transporter 6 (OPT6) from Arabidopsis thaliana (Mouse-ear cress).